Consider the following 156-residue polypeptide: Small ribosomal subunit protein uS7 (156 aa).

This sequence belongs to the universal ribosomal protein uS7 family. As to quaternary structure, part of the 30S ribosomal subunit. Contacts proteins S9 and S11.

One of the primary rRNA binding proteins, it binds directly to 16S rRNA where it nucleates assembly of the head domain of the 30S subunit. Is located at the subunit interface close to the decoding center, probably blocks exit of the E-site tRNA. This Ralstonia nicotianae (strain ATCC BAA-1114 / GMI1000) (Ralstonia solanacearum) protein is Small ribosomal subunit protein uS7.